The chain runs to 298 residues: 4-diphosphocytidyl-2-C-methyl-D-erythritol kinase (298 aa).

Residue lysine 15 is part of the active site. 102 to 112 (PVAAGIGGGSS) is a binding site for ATP. Aspartate 142 is a catalytic residue.

It belongs to the GHMP kinase family. IspE subfamily.

It carries out the reaction 4-CDP-2-C-methyl-D-erythritol + ATP = 4-CDP-2-C-methyl-D-erythritol 2-phosphate + ADP + H(+). It functions in the pathway isoprenoid biosynthesis; isopentenyl diphosphate biosynthesis via DXP pathway; isopentenyl diphosphate from 1-deoxy-D-xylulose 5-phosphate: step 3/6. In terms of biological role, catalyzes the phosphorylation of the position 2 hydroxy group of 4-diphosphocytidyl-2C-methyl-D-erythritol. This chain is 4-diphosphocytidyl-2-C-methyl-D-erythritol kinase, found in Hyphomonas neptunium (strain ATCC 15444).